The primary structure comprises 369 residues: Putative cyclin-F1-1 (369 aa).

Residues 328 to 350 are disordered; it reads AQHHLESKPAGAAGVGINSSGDD.

This sequence belongs to the cyclin family. Cyclin F subfamily.

This is Putative cyclin-F1-1 (CYCF1-1) from Oryza sativa subsp. japonica (Rice).